Here is a 431-residue protein sequence, read N- to C-terminus: E3 ubiquitin-protein ligase marc-3 (431 aa).

An RING-CH-type zinc finger spans residues 5-74; the sequence is NASLGPAVCR…EICKFAFKIK (70 aa). Zn(2+) contacts are provided by cysteine 13, cysteine 16, cysteine 38, cysteine 40, histidine 48, cysteine 51, cysteine 64, and cysteine 67. 2 helical membrane passes run 98 to 118 and 157 to 177; these read PFID…GVFM and LFLF…VSAL. Disordered stretches follow at residues 267–289 and 327–349; these read TSPD…FGRR and SRAT…RDMR. The span at 273-282 shows a compositional bias: basic and acidic residues; it reads NTHHHDESRN.

Its subcellular location is the cell membrane. It localises to the endosome membrane. It carries out the reaction S-ubiquitinyl-[E2 ubiquitin-conjugating enzyme]-L-cysteine + [acceptor protein]-L-lysine = [E2 ubiquitin-conjugating enzyme]-L-cysteine + N(6)-ubiquitinyl-[acceptor protein]-L-lysine.. Its pathway is protein modification; protein ubiquitination. Functionally, E3 ubiquitin-protein ligase which positively regulates the fast polyspermy block during fertilization, preventing entry of more than one sperm into the oocyte. After fertilization, required in the zygote for the selective degradation of a subset of maternal membrane proteins including cav-1, chs-1 and rme-2, probably by mediating their K63-linked polyubiquitination. The polypeptide is E3 ubiquitin-protein ligase marc-3 (Caenorhabditis elegans).